Reading from the N-terminus, the 649-residue chain is Extracellular metalloproteinase 4 (649 aa).

Residues 1–18 form the signal peptide; the sequence is MHGLLLAGLLALPSNVLG. A propeptide spanning residues 19–260 is cleaved from the precursor; sequence HPAEPPNSVN…VHGVVDYVAS (242 aa). Zn(2+) is bound at residue H443. E444 is an active-site residue. H447 contacts Zn(2+). N494 and N609 each carry an N-linked (GlcNAc...) asparagine glycan.

It belongs to the peptidase M36 family. Requires Zn(2+) as cofactor.

It localises to the secreted. Secreted metalloproteinase probably acting as a virulence factor. This Arthroderma otae (strain ATCC MYA-4605 / CBS 113480) (Microsporum canis) protein is Extracellular metalloproteinase 4 (MEP4).